Here is a 221-residue protein sequence, read N- to C-terminus: Octanoyltransferase (221 aa).

The 183-residue stretch at 38-220 (GEIPDTLLLL…GFREVLGDPG (183 aa)) folds into the BPL/LPL catalytic domain. Substrate-binding positions include 84–91 (RGGDATFH), 149–151 (AIG), and 163–165 (GFA). Cysteine 181 serves as the catalytic Acyl-thioester intermediate.

It belongs to the LipB family.

The protein localises to the cytoplasm. The catalysed reaction is octanoyl-[ACP] + L-lysyl-[protein] = N(6)-octanoyl-L-lysyl-[protein] + holo-[ACP] + H(+). It functions in the pathway protein modification; protein lipoylation via endogenous pathway; protein N(6)-(lipoyl)lysine from octanoyl-[acyl-carrier-protein]: step 1/2. Catalyzes the transfer of endogenously produced octanoic acid from octanoyl-acyl-carrier-protein onto the lipoyl domains of lipoate-dependent enzymes. Lipoyl-ACP can also act as a substrate although octanoyl-ACP is likely to be the physiological substrate. The polypeptide is Octanoyltransferase (Rubrobacter xylanophilus (strain DSM 9941 / JCM 11954 / NBRC 16129 / PRD-1)).